The chain runs to 836 residues: Transcription factor vrtR2 (836 aa).

Residues 1–26 (MPSLSSKTSTMQRSCRPQMSACPNQQ) show a composition bias toward polar residues. Residues 1–29 (MPSLSSKTSTMQRSCRPQMSACPNQQQKD) are disordered. Residues 37-63 (CVLCRDRKLKCDKLDPCSNCTSSGVAC) constitute a DNA-binding region (zn(2)-C6 fungal-type). The interval 72 to 114 (PRGRHARTVQTKASTPPDTRRRGSSNESTTAPAPDDGGLGTHI) is disordered. The span at 79-88 (TVQTKASTPP) shows a compositional bias: polar residues.

It localises to the nucleus. In terms of biological role, probable transcription factor that regulates expression of the gene cluster that mediates the biosynthesis of viridicatumtoxin, a tetracycline-like fungal meroterpenoid with a unique, fused spirobicyclic ring system. The chain is Transcription factor vrtR2 from Penicillium aethiopicum.